A 472-amino-acid chain; its full sequence is Carboxypeptidase Q (472 aa).

Positions 1–20 (MKFLLFMFVGVVHLLPLASG) are cleaved as a signal peptide. The propeptide occupies 21–44 (KAIYGNGPSQRTFQEIKEEIAHYG). N-linked (GlcNAc...) asparagine glycosylation is found at Asn52, Asn61, and Asn179. Zn(2+) is bound by residues His290 and Asp302. Glu336 acts as the Nucleophile in catalysis. Glu337 serves as a coordination point for Zn(2+). 2 N-linked (GlcNAc...) asparagine glycosylation sites follow: Asn353 and Asn356. Asp364 provides a ligand contact to Zn(2+). An N-linked (GlcNAc...) asparagine glycan is attached at Asn396. His434 contributes to the Zn(2+) binding site.

The protein belongs to the peptidase M28 family. Homodimer. The monomeric form is inactive while the homodimer is active. N-glycosylated. The secreted form is modified by hybrid or complex type oligosaccharide chains.

The protein resides in the endoplasmic reticulum. Its subcellular location is the golgi apparatus. It is found in the lysosome. It localises to the secreted. Its function is as follows. Carboxypeptidase that may play an important role in the hydrolysis of circulating peptides. Catalyzes the hydrolysis of dipeptides with unsubstituted terminals into amino acids. May play a role in the liberation of thyroxine hormone from its thyroglobulin (Tg) precursor. The polypeptide is Carboxypeptidase Q (CPQ) (Bos taurus (Bovine)).